A 377-amino-acid polypeptide reads, in one-letter code: WAT1-related protein At3g56620 (377 aa).

10 helical membrane passes run 13–33 (FAMVCLQFGYAGMNLVTKVVL), 40–60 (YVLVAYRNAFATAAIAPFALL), 67–87 (PKMTFPIFMQIFVLALLGPLI), 102–122 (TFAGAVTNIVPALTFIISIIC), 142–162 (LVIVVGAMLMILFKIPLITFL), 183–203 (VFLLIASFSWASFFVLQAATL), 210–230 (LSLSTMVCFMGTLQSTALTFV), 235–255 (LSAWNIGFDMNLLASAYAGIM), 274–294 (IFVTAFNPLVVIIGSIIGFLI), and 299–319 (LNLGGVLGMAILVVGVCTVLW). EamA domains lie at 22–152 (YAGM…MLMI) and 190–318 (FSWA…CTVL).

This sequence belongs to the drug/metabolite transporter (DMT) superfamily. Plant drug/metabolite exporter (P-DME) (TC 2.A.7.4) family.

It localises to the membrane. This Arabidopsis thaliana (Mouse-ear cress) protein is WAT1-related protein At3g56620.